The primary structure comprises 873 residues: Protein SEY1 (873 aa).

Residues 1 to 750 (MVANGHFFAG…KRSAIGGITQ (750 aa)) lie on the Cytoplasmic side of the membrane. A GB1/RHD3-type G domain is found at 50–308 (GFNYHLISVF…IPADGFAVYA (259 aa)). 60 to 67 (GSQSTGKS) contacts GTP. Positions 677–701 (LDKWIGHTPSSATPADEEDLTPIGG) are disordered. Residues 691–701 (ADEEDLTPIGG) show a composition bias toward acidic residues. A helical membrane pass occupies residues 751–771 (VPLYFYGLLLALGWNEIVAVL). Over 772–774 (RNP) the chain is Lumenal. The helical transmembrane segment at 775 to 795 (AYFLLLFVCAVTAYVTYQLNL) threads the bilayer. Over 796 to 873 (WGPIIKMTEA…IDDADDDDDF (78 aa)) the chain is Cytoplasmic. The segment at 841-873 (EGYDMSNMKNRKSAGGYQNNRSHIDDADDDDDF) is disordered.

Belongs to the TRAFAC class dynamin-like GTPase superfamily. GB1/RHD3 GTPase family. RHD3 subfamily.

It localises to the endoplasmic reticulum membrane. Its function is as follows. Cooperates with the reticulon proteins and tubule-shaping DP1 family proteins to generate and maintain the structure of the tubular endoplasmic reticulum network. Has GTPase activity, which is required for its function in ER organization. In Paracoccidioides lutzii (strain ATCC MYA-826 / Pb01) (Paracoccidioides brasiliensis), this protein is Protein SEY1.